The primary structure comprises 338 residues: Glycerol-3-phosphate dehydrogenase [NAD(P)+] (338 aa).

NADPH is bound by residues Ser-13, Trp-14, and Lys-108. 3 residues coordinate sn-glycerol 3-phosphate: Lys-108, Gly-139, and Ser-141. Residue Ala-143 coordinates NADPH. 5 residues coordinate sn-glycerol 3-phosphate: Lys-194, Asp-247, Ser-257, Arg-258, and Asn-259. Residue Lys-194 is the Proton acceptor of the active site. Position 258 (Arg-258) interacts with NADPH. NADPH is bound by residues Val-282 and Glu-284.

It belongs to the NAD-dependent glycerol-3-phosphate dehydrogenase family.

The protein localises to the cytoplasm. It catalyses the reaction sn-glycerol 3-phosphate + NAD(+) = dihydroxyacetone phosphate + NADH + H(+). The catalysed reaction is sn-glycerol 3-phosphate + NADP(+) = dihydroxyacetone phosphate + NADPH + H(+). It participates in membrane lipid metabolism; glycerophospholipid metabolism. Catalyzes the reduction of the glycolytic intermediate dihydroxyacetone phosphate (DHAP) to sn-glycerol 3-phosphate (G3P), the key precursor for phospholipid synthesis. The polypeptide is Glycerol-3-phosphate dehydrogenase [NAD(P)+] (Listeria monocytogenes serotype 4b (strain CLIP80459)).